The following is a 631-amino-acid chain: Transcription factor dibT (631 aa).

Residues 11-38 (CWTCRLRRKRCDSVQPVCGSCQSLEITC) constitute a DNA-binding region (zn(2)-C6 fungal-type). Over residues 123–144 (SLADSSASTPSTSSGRPTTLRS) the composition is skewed to low complexity. Disordered stretches follow at residues 123-148 (SLADSSASTPSTSSGRPTTLRSSVDR) and 469-488 (GLKDLDTSPPSPQPTKTSAG).

It is found in the nucleus. In terms of biological role, transcription factor; part of the gene cluster that mediates the biosynthesis of pestalotiollide B which is part of dibenzodioxocinones, a novel class of inhibitors against cholesterol ester transfer protein (CEPT). Acts as the key transcription factor within the cluster and positively regulates the expression of the cluster genes and the subsequent production of dibenzodioxocinones such as pestalotiollide B, pestalotiollide C, 1',2'-dehydropenicillide, 3'-methoxy-1',2'-dehydropenicillide and 1',2'-epoxy-3',4'-didehydropenicillide. Required for the expression of most PKS genes outside of the dibenzodioxocinones cluster, (43 out of 48 defined PKS genes), and promotes pigmentation of the mycelium and conidia. This chain is Transcription factor dibT, found in Pestalotiopsis microspora.